Consider the following 257-residue polypeptide: Pyridoxine 5'-phosphate synthase (257 aa).

Asn16 provides a ligand contact to 3-amino-2-oxopropyl phosphate. A 1-deoxy-D-xylulose 5-phosphate-binding site is contributed by 18-19 (DH). 3-amino-2-oxopropyl phosphate is bound at residue Arg27. Catalysis depends on His52, which acts as the Proton acceptor. 1-deoxy-D-xylulose 5-phosphate contacts are provided by Arg54 and His59. Glu79 serves as the catalytic Proton acceptor. Residue Thr109 participates in 1-deoxy-D-xylulose 5-phosphate binding. The active-site Proton donor is His200. 3-amino-2-oxopropyl phosphate is bound by residues Gly201 and 222–223 (GH).

The protein belongs to the PNP synthase family. In terms of assembly, homooctamer; tetramer of dimers.

It is found in the cytoplasm. It catalyses the reaction 3-amino-2-oxopropyl phosphate + 1-deoxy-D-xylulose 5-phosphate = pyridoxine 5'-phosphate + phosphate + 2 H2O + H(+). The protein operates within cofactor biosynthesis; pyridoxine 5'-phosphate biosynthesis; pyridoxine 5'-phosphate from D-erythrose 4-phosphate: step 5/5. Its function is as follows. Catalyzes the complicated ring closure reaction between the two acyclic compounds 1-deoxy-D-xylulose-5-phosphate (DXP) and 3-amino-2-oxopropyl phosphate (1-amino-acetone-3-phosphate or AAP) to form pyridoxine 5'-phosphate (PNP) and inorganic phosphate. The sequence is that of Pyridoxine 5'-phosphate synthase from Burkholderia pseudomallei (strain 1710b).